We begin with the raw amino-acid sequence, 426 residues long: PHD finger-containing protein 6 (426 aa).

The PHD-type zinc-finger motif lies at arginine 9–arginine 59. Residues cysteine 12, cysteine 15, cysteine 27, cysteine 30, histidine 36, cysteine 39, cysteine 53, and cysteine 56 each contribute to the Zn(2+) site. Disordered stretches follow at residues threonine 122 to phenylalanine 144 and arginine 185 to alanine 205.

As to quaternary structure, interacts directly with AIPP3/BDT1.

Its function is as follows. Together with AIPP3/BDT1, cooperates to form a BAH-PHD bivalent histone reader complex able to read histone H3 lysine 27 trimethylation (H3K27me3) histone marks in order to regulate transcription, especially to prevent early flowering; promotes AIPP3/BDT1 binding to H3K27me3. The chain is PHD finger-containing protein 6 from Arabidopsis thaliana (Mouse-ear cress).